A 401-amino-acid chain; its full sequence is Elongation factor Tu, apicoplast (401 aa).

In terms of domain architecture, tr-type G spans 10–206 (KPHINIGTIG…ALDSYIPLPK (197 aa)). The G1 stretch occupies residues 19–26 (GHVDHGKT). 19–26 (GHVDHGKT) lines the GTP pocket. Residue Thr26 coordinates Mg(2+). The tract at residues 60 to 64 (GITIK) is G2. Positions 81–84 (DCPG) are G3. GTP contacts are provided by residues 81–85 (DCPGH) and 136–139 (NKID). The tract at residues 136 to 139 (NKID) is G4. The G5 stretch occupies residues 173–175 (SAL).

This sequence belongs to the TRAFAC class translation factor GTPase superfamily. Classic translation factor GTPase family. EF-Tu/EF-1A subfamily. Monomer.

The protein localises to the plastid. It localises to the apicoplast. It carries out the reaction GTP + H2O = GDP + phosphate + H(+). Functionally, GTP hydrolase that promotes the GTP-dependent binding of aminoacyl-tRNA to the A-site of ribosomes during protein biosynthesis. This chain is Elongation factor Tu, apicoplast (tufA), found in Toxoplasma gondii.